The sequence spans 73 residues: Translation initiation factor IF-1 (73 aa).

An S1-like domain is found at 1–72; the sequence is MAKEDVIEVE…TKGRITYRFI (72 aa).

Belongs to the IF-1 family. As to quaternary structure, component of the 30S ribosomal translation pre-initiation complex which assembles on the 30S ribosome in the order IF-2 and IF-3, IF-1 and N-formylmethionyl-tRNA(fMet); mRNA recruitment can occur at any time during PIC assembly.

Its subcellular location is the cytoplasm. Functionally, one of the essential components for the initiation of protein synthesis. Stabilizes the binding of IF-2 and IF-3 on the 30S subunit to which N-formylmethionyl-tRNA(fMet) subsequently binds. Helps modulate mRNA selection, yielding the 30S pre-initiation complex (PIC). Upon addition of the 50S ribosomal subunit IF-1, IF-2 and IF-3 are released leaving the mature 70S translation initiation complex. This is Translation initiation factor IF-1 from Lactobacillus johnsonii (strain CNCM I-12250 / La1 / NCC 533).